Consider the following 951-residue polypeptide: Valine--tRNA ligase (951 aa).

The 'HIGH' region signature appears at 42 to 52; that stretch reads PNVTGSLHMGH. A 'KMSKS' region motif is present at residues 554–558; it reads KMSKS. ATP is bound at residue Lys557. The stretch at 882–951 forms a coiled coil; sequence LIDKDAELAR…EEQKATIAAL (70 aa).

This sequence belongs to the class-I aminoacyl-tRNA synthetase family. ValS type 1 subfamily. Monomer.

The protein localises to the cytoplasm. It carries out the reaction tRNA(Val) + L-valine + ATP = L-valyl-tRNA(Val) + AMP + diphosphate. Catalyzes the attachment of valine to tRNA(Val). As ValRS can inadvertently accommodate and process structurally similar amino acids such as threonine, to avoid such errors, it has a 'posttransfer' editing activity that hydrolyzes mischarged Thr-tRNA(Val) in a tRNA-dependent manner. The sequence is that of Valine--tRNA ligase from Vibrio vulnificus (strain CMCP6).